The sequence spans 401 residues: cAMP-dependent protein kinase type II-alpha regulatory subunit (401 aa).

S2 bears the N-acetylserine mark. A dimerization and phosphorylation region spans residues 2–135 (SHIQIPPGLT…RLQEACKDIL (134 aa)). Phosphoserine occurs at positions 47, 74, 76, and 96. A disordered region spans residues 61 to 83 (ESSAVPVIEEDGESDSDSEDADL). Residues 68–83 (IEEDGESDSDSEDADL) are compositionally biased toward acidic residues. Residues 136–257 (LFKN…ESVP), E205, R214, 258–401 (LFKS…DPGQ), E335, and R344 each bind 3',5'-cyclic AMP. At T212 the chain carries Phosphothreonine; by PDPK1. S347 and S392 each carry phosphoserine.

The protein belongs to the cAMP-dependent kinase regulatory chain family. As to quaternary structure, the inactive form of the enzyme is composed of two regulatory chains and two catalytic chains. Activation by cAMP produces two active catalytic monomers and a regulatory dimer that binds four cAMP molecules. Interacts with AKAP4. Interacts with CBFA2T3. Interacts with the phosphorylated form of PJA2. Interacts with MYRIP. This interaction may link PKA to components of the exocytosis machinery, thus facilitating exocytosis, including insulin release. Forms a complex composed of PRKAR2A, GSK3B and GSKIP through GSKIP interaction; facilitates PKA-induced phosphorylation and regulates GSK3B activity. Interacts with ADCY8; inhibits adenylate cyclase activity through PKA phosphorylation. Post-translationally, phosphorylated by the activated catalytic chain. As to expression, four types of regulatory chains are found: I-alpha, I-beta, II-alpha, and II-beta. Their expression varies among tissues and is in some cases constitutive and in others inducible.

The protein resides in the cytoplasm. Its subcellular location is the cell membrane. In terms of biological role, regulatory subunit of the cAMP-dependent protein kinases involved in cAMP signaling in cells. Type II regulatory chains mediate membrane association by binding to anchoring proteins, including the MAP2 kinase. This chain is cAMP-dependent protein kinase type II-alpha regulatory subunit (Prkar2a), found in Mus musculus (Mouse).